We begin with the raw amino-acid sequence, 263 residues long: Cobalt-precorrin-6A reductase (263 aa).

Belongs to the precorrin-6x reductase family.

The catalysed reaction is Co-precorrin-6B + NAD(+) = Co-precorrin-6A + NADH + H(+). It participates in cofactor biosynthesis; adenosylcobalamin biosynthesis; cob(II)yrinate a,c-diamide from sirohydrochlorin (anaerobic route): step 7/10. Catalyzes the reduction of the macrocycle of cobalt-precorrin-6A to cobalt-precorrin-6B. The chain is Cobalt-precorrin-6A reductase (cbiJ) from Salmonella typhimurium (strain LT2 / SGSC1412 / ATCC 700720).